A 201-amino-acid chain; its full sequence is MYIGRFLVLGKTDEGNPFVTYRVSSRSFPNRVAKVMNDETVAILPKDLEEMFKNPYITYNCVKLVGDVAVATNGSHTDIIADKIKLGLPIRDALSYSLLTMDYEKDDYNTPRIAVVITKDEAYMGYVTDSDVRIKKVELEAGKAYYLSVYEACKITEHQVISVTGKTAEEVTKFVMDYEEFEKPVTAATVLVKDGFKLATI.

This sequence belongs to the archaeal IMP cyclohydrolase family.

It catalyses the reaction IMP + H2O = 5-formamido-1-(5-phospho-D-ribosyl)imidazole-4-carboxamide. It participates in purine metabolism; IMP biosynthesis via de novo pathway; IMP from 5-formamido-1-(5-phospho-D-ribosyl)imidazole-4-carboxamide: step 1/1. Its function is as follows. Catalyzes the cyclization of 5-formylamidoimidazole-4-carboxamide ribonucleotide to IMP. The protein is IMP cyclohydrolase of Methanococcus maripaludis (strain DSM 14266 / JCM 13030 / NBRC 101832 / S2 / LL).